The primary structure comprises 883 residues: Protein argonaute 16 (883 aa).

A PAZ domain is found at 254–366; it reads PVFDFLLTNQ…VPIELCHMVS (113 aa). Residues 535–844 enclose the Piwi domain; it reads FLLCVLPERK…AAAQMGQFMK (310 aa).

It belongs to the argonaute family. Ago subfamily.

Functionally, probably involved in the RNA silencing pathway. May bind to short RNAs such as microRNAs (miRNAs) or short interfering RNAs (siRNAs), and represses the translation of mRNAs which are complementary to them. This is Protein argonaute 16 (AGO16) from Oryza sativa subsp. japonica (Rice).